We begin with the raw amino-acid sequence, 248 residues long: Pulmonary surfactant-associated protein A (248 aa).

Positions 1–17 are cleaved as a signal peptide; that stretch reads MWLRCLALALTLLMVSG. Asn20 is a glycosylation site (N-linked (GlcNAc...) asparagine). A Collagen-like domain is found at 28 to 100; it reads GNPGIPGTPG…PGERGPPGLP (73 aa). A disordered region spans residues 29–103; sequence NPGIPGTPGS…RGPPGLPASL (75 aa). Pro30, Pro33, Pro36, Pro42, Pro54, Pro57, Pro63, Pro67, and Pro70 each carry 4-hydroxyproline. Positions 42–51 are enriched in basic and acidic residues; that stretch reads PGRDGRDGVK. The segment covering 54-65 has biased composition (pro residues); sequence PGPPGPLGPPGG. Over residues 84-93 the composition is skewed to basic and acidic residues; that stretch reads ERGEKGEPGE. In terms of domain architecture, C-type lectin spans 132–248; it reads LVVGRKVFSS…LQYRLAICEF (117 aa). Cystine bridges form between Cys155–Cys246 and Cys224–Cys238. An N-linked (GlcNAc...) asparagine glycan is attached at Asn207. Residues Glu215, Arg217, and Asn234 each contribute to the Ca(2+) site.

Belongs to the SFTPA family. As to quaternary structure, oligomeric complex of 6 set of homotrimers.

It is found in the secreted. It localises to the extracellular space. The protein resides in the extracellular matrix. The protein localises to the surface film. In terms of biological role, in presence of calcium ions, it binds to surfactant phospholipids and contributes to lower the surface tension at the air-liquid interface in the alveoli of the mammalian lung and is essential for normal respiration. Enhances the expression of MYO18A/SP-R210 on alveolar macrophages. This Canis lupus familiaris (Dog) protein is Pulmonary surfactant-associated protein A (SFTPA1).